The chain runs to 234 residues: Ponticulin-like protein J (234 aa).

The first 20 residues, 1–20 (MRLLNNLILMVVLFVAVSNA), serve as a signal peptide directing secretion. N-linked (GlcNAc...) asparagine glycosylation is found at Asn-19, Asn-143, Asn-166, and Asn-206. Positions 115–213 (TIKCGTLPPD…SDNETAEGNN (99 aa)) are disordered. Positions 154 to 195 (KSTPKSPSTPKTNNSNEDSDLTTSSSDSSSSTKSSPKSKSST) are enriched in low complexity. Asn-212 carries GPI-like-anchor amidated asparagine lipidation. Residue Asn-213 is glycosylated (N-linked (GlcNAc...) asparagine). Positions 213–234 (NASSNIATFSLVIISLLVASLF) are cleaved as a propeptide — removed in mature form.

Belongs to the ponticulin family. In terms of processing, the GPI-like-anchor contains a phosphoceramide group, rather than a phosphatidyl group.

It localises to the cell membrane. Its function is as follows. Binds F-actin and nucleates actin assembly. The polypeptide is Ponticulin-like protein J (ponJ) (Dictyostelium discoideum (Social amoeba)).